We begin with the raw amino-acid sequence, 260 residues long: Imidazole glycerol phosphate synthase subunit HisF (260 aa).

Catalysis depends on residues Asp11 and Asp130.

This sequence belongs to the HisA/HisF family. Heterodimer of HisH and HisF.

Its subcellular location is the cytoplasm. It catalyses the reaction 5-[(5-phospho-1-deoxy-D-ribulos-1-ylimino)methylamino]-1-(5-phospho-beta-D-ribosyl)imidazole-4-carboxamide + L-glutamine = D-erythro-1-(imidazol-4-yl)glycerol 3-phosphate + 5-amino-1-(5-phospho-beta-D-ribosyl)imidazole-4-carboxamide + L-glutamate + H(+). The protein operates within amino-acid biosynthesis; L-histidine biosynthesis; L-histidine from 5-phospho-alpha-D-ribose 1-diphosphate: step 5/9. In terms of biological role, IGPS catalyzes the conversion of PRFAR and glutamine to IGP, AICAR and glutamate. The HisF subunit catalyzes the cyclization activity that produces IGP and AICAR from PRFAR using the ammonia provided by the HisH subunit. The chain is Imidazole glycerol phosphate synthase subunit HisF from Psychrobacter arcticus (strain DSM 17307 / VKM B-2377 / 273-4).